A 417-amino-acid polypeptide reads, in one-letter code: Tryptophan synthase beta chain (417 aa).

Residue Lys99 is modified to N6-(pyridoxal phosphate)lysine.

Belongs to the TrpB family. In terms of assembly, tetramer of two alpha and two beta chains. Pyridoxal 5'-phosphate serves as cofactor.

The catalysed reaction is (1S,2R)-1-C-(indol-3-yl)glycerol 3-phosphate + L-serine = D-glyceraldehyde 3-phosphate + L-tryptophan + H2O. It functions in the pathway amino-acid biosynthesis; L-tryptophan biosynthesis; L-tryptophan from chorismate: step 5/5. The beta subunit is responsible for the synthesis of L-tryptophan from indole and L-serine. The sequence is that of Tryptophan synthase beta chain from Corynebacterium glutamicum (strain R).